The following is a 947-amino-acid chain: Bromodomain testis-specific protein (947 aa).

The Bromo 1 domain occupies 27–133 (RLTNQLQYLQ…KLFVQKLSQM (107 aa)). S187 bears the Phosphoserine mark. The short motif at 209–220 (KGVKRKADTTTP) is the Nuclear localization signal element. In terms of domain architecture, Bromo 2 spans 267-376 (VKVTEQLRHC…DVFETHFSKI (110 aa)). Disordered regions lie at residues 395–421 (ETTGRENTNEASSEGNSSGDSEDERVQ), 444–512 (PFRK…PMNY), 610–690 (NNQL…VKKM), and 849–873 (HLEQNTKEPKVSQENQRDLGNGLTV). Over residues 403–413 (NEASSEGNSSG) the composition is skewed to low complexity. Residues 417 to 470 (DERVQRLAKLQEQLKAVHQQLQVLSQVPFRKLNKKKEKSKKEKKKEKVNNSNEN) adopt a coiled-coil conformation. Over residues 447 to 462 (KLNKKKEKSKKEKKKE) the composition is skewed to basic residues. The segment covering 470–481 (NPRKMCEQMRLK) has biased composition (basic and acidic residues). The span at 482–494 (EKSKRNQPKKRKQ) shows a compositional bias: basic residues. Positions 500 to 582 (KSEDEDNAKP…ACLRKRPLKP (83 aa)) constitute an NET domain. Over residues 631–668 (VGSVSRLSESSSSSSSSSESESSSSDLSSSDSSGSESE) the composition is skewed to low complexity. Basic and acidic residues-rich tracts occupy residues 674–690 (TEVKPNDSPSKENVKKM) and 849–865 (HLEQNTKEPKVSQENQR).

It belongs to the BET family. In terms of assembly, interacts with SMARCE1. Interacts with mRNA splicing machinery proteins SRSF2, DDX5, HNRNPK and TARDBP. Interacts with the acetylated N-terminus of histone H1, H2, H3 and H4. Interacts with P-TEFb components CDK9 and CCNT1/cyclin-T1. In terms of processing, ubiquitinated in a SPOP-dependent manner, leading to proteasomal degradation.

It is found in the nucleus. Testis-specific chromatin protein that specifically binds histone H4 acetylated at 'Lys-5' and 'Lys-8' (H4K5ac and H4K8ac, respectively) and plays a key role in spermatogenesis. Required in late pachytene spermatocytes: plays a role in meiotic and post-meiotic cells by binding to acetylated histones at the promoter of specific meiotic and post-meiotic genes, facilitating their activation at the appropriate time. In the post-meiotic phase of spermatogenesis, binds to hyperacetylated histones and participates in their general removal from DNA. Also recognizes and binds a subset of butyrylated histones: able to bind histone H4 butyrylated at 'Lys-8' (H4K8ac), while it is not able to bind H4 butyrylated at 'Lys-5' (H4K5ac). Also acts as a component of the splicing machinery in pachytene spermatocytes and round spermatids and participates in 3'-UTR truncation of specific mRNAs in post-meiotic spermatids. Required for chromocenter organization, a structure comprised of peri-centromeric heterochromatin. The chain is Bromodomain testis-specific protein (BRDT) from Macaca fascicularis (Crab-eating macaque).